The following is a 140-amino-acid chain: Large ribosomal subunit protein uL11 (140 aa).

This sequence belongs to the universal ribosomal protein uL11 family. As to quaternary structure, part of the ribosomal stalk of the 50S ribosomal subunit. Interacts with L10 and the large rRNA to form the base of the stalk. L10 forms an elongated spine to which L12 dimers bind in a sequential fashion forming a multimeric L10(L12)X complex. Post-translationally, one or more lysine residues are methylated.

Its function is as follows. Forms part of the ribosomal stalk which helps the ribosome interact with GTP-bound translation factors. The sequence is that of Large ribosomal subunit protein uL11 from Thermoanaerobacter pseudethanolicus (strain ATCC 33223 / 39E) (Clostridium thermohydrosulfuricum).